A 329-amino-acid polypeptide reads, in one-letter code: D-alanine--D-alanine ligase (329 aa).

An ATP-grasp domain is found at 120-326 (KLWYDALDIP…FHEFLEDCIN (207 aa)). ATP is bound at residue 150 to 205 (AFEKWGKVFVKAARQGSSVGCYSVAEKQAIAKAVNDAFGYSDQVLVEKAVKPRELE). Residues Asp-280, Glu-293, and Asn-295 each coordinate Mg(2+).

This sequence belongs to the D-alanine--D-alanine ligase family. Mg(2+) is required as a cofactor. Mn(2+) serves as cofactor.

The protein localises to the cytoplasm. It catalyses the reaction 2 D-alanine + ATP = D-alanyl-D-alanine + ADP + phosphate + H(+). Its pathway is cell wall biogenesis; peptidoglycan biosynthesis. In terms of biological role, cell wall formation. This is D-alanine--D-alanine ligase from Vibrio parahaemolyticus serotype O3:K6 (strain RIMD 2210633).